Here is a 594-residue protein sequence, read N- to C-terminus: DNA ligase (594 aa).

Glu256 lines the ATP pocket. Lys258 serves as the catalytic N6-AMP-lysine intermediate. ATP-binding residues include Arg263, Arg279, Glu309, Phe349, Arg426, and Lys432.

This sequence belongs to the ATP-dependent DNA ligase family. The cofactor is Mg(2+).

The enzyme catalyses ATP + (deoxyribonucleotide)n-3'-hydroxyl + 5'-phospho-(deoxyribonucleotide)m = (deoxyribonucleotide)n+m + AMP + diphosphate.. Its function is as follows. DNA ligase that seals nicks in double-stranded DNA during DNA replication, DNA recombination and DNA repair. The protein is DNA ligase of Ignicoccus hospitalis (strain KIN4/I / DSM 18386 / JCM 14125).